Consider the following 224-residue polypeptide: Deoxyribose-phosphate aldolase (224 aa).

Asp93 functions as the Proton donor/acceptor in the catalytic mechanism. Lys159 (schiff-base intermediate with acetaldehyde) is an active-site residue. The active-site Proton donor/acceptor is Lys189.

The protein belongs to the DeoC/FbaB aldolase family. DeoC type 1 subfamily.

It is found in the cytoplasm. It carries out the reaction 2-deoxy-D-ribose 5-phosphate = D-glyceraldehyde 3-phosphate + acetaldehyde. The protein operates within carbohydrate degradation; 2-deoxy-D-ribose 1-phosphate degradation; D-glyceraldehyde 3-phosphate and acetaldehyde from 2-deoxy-alpha-D-ribose 1-phosphate: step 2/2. Catalyzes a reversible aldol reaction between acetaldehyde and D-glyceraldehyde 3-phosphate to generate 2-deoxy-D-ribose 5-phosphate. The chain is Deoxyribose-phosphate aldolase from Mycobacterium bovis (strain ATCC BAA-935 / AF2122/97).